The sequence spans 406 residues: Succinylornithine transaminase (406 aa).

K252 bears the N6-(pyridoxal phosphate)lysine mark.

The protein belongs to the class-III pyridoxal-phosphate-dependent aminotransferase family. AstC subfamily. It depends on pyridoxal 5'-phosphate as a cofactor.

The enzyme catalyses N(2)-succinyl-L-ornithine + 2-oxoglutarate = N-succinyl-L-glutamate 5-semialdehyde + L-glutamate. It functions in the pathway amino-acid degradation; L-arginine degradation via AST pathway; L-glutamate and succinate from L-arginine: step 3/5. Catalyzes the transamination of N(2)-succinylornithine and alpha-ketoglutarate into N(2)-succinylglutamate semialdehyde and glutamate. Can also act as an acetylornithine aminotransferase. The protein is Succinylornithine transaminase of Shigella boydii serotype 18 (strain CDC 3083-94 / BS512).